A 2969-amino-acid chain; its full sequence is Histone-lysine N-methyltransferase ASH1L (2969 aa).

2 disordered regions span residues 1–70 (MDPR…TDAQ) and 118–143 (HPRK…RDPS). A compositionally biased stretch (polar residues) spans 21 to 31 (KSPSAISTGTL). At serine 22 the chain carries Phosphoserine. Composition is skewed to basic and acidic residues over residues 33 to 65 (SKRE…KDDG) and 127 to 143 (KMTD…RDPS). Lysine 34 is covalently cross-linked (Glycyl lysine isopeptide (Lys-Gly) (interchain with G-Cter in SUMO2)). An N6-acetyllysine modification is found at lysine 375. Lysine 425 participates in a covalent cross-link: Glycyl lysine isopeptide (Lys-Gly) (interchain with G-Cter in SUMO2). Residues 501–511 (IQQDSFSSSEK) are compositionally biased toward polar residues. Disordered stretches follow at residues 501–525 (IQQD…QPPV), 537–583 (ASDV…PNPL), 824–845 (YKPK…PPKR), 878–966 (KQGL…EMEP), 1100–1128 (SEIL…AGFV), 1151–1231 (MKKA…EHVS), and 1243–1281 (SLKE…QLRN). Over residues 512-522 (GSYETSKHEKQ) the composition is skewed to basic and acidic residues. A compositionally biased stretch (polar residues) spans 554–579 (NLPSPSPTVSVNPLTRSPPETSSQLA). Residues 887-897 (PKKRGRPKRQM) show a composition bias toward basic residues. The a.T hook 1 DNA-binding region spans 887 to 899 (PKKRGRPKRQMRS). Residues 920–932 (SKLESESDNHRSS) show a composition bias toward basic and acidic residues. Positions 936 to 949 (FESEDQLQDPDDLD) are enriched in acidic residues. Composition is skewed to low complexity over residues 1100-1123 (SEIL…PVSS) and 1162-1175 (SPPT…SHLS). Phosphoserine occurs at positions 1162 and 1170. A compositionally biased stretch (polar residues) spans 1186–1211 (SPISESHSDETIPSDSGIGTDNNSTS). Glutamine 1220 bears the N5-methylglutamine mark. 2 stretches are compositionally biased toward basic residues: residues 1246–1256 (EKHKHKCKRRN) and 1266–1277 (KRQKRKRKKKYP). The segment at residues 1347–1359 (KKKRGRPPKMREA) is a DNA-binding region (a.T hook 2). Disordered regions lie at residues 1489–1508 (HREH…GSSR), 1580–1711 (SESS…ASGD), and 1741–1761 (ASAP…TLGK). Composition is skewed to polar residues over residues 1496–1508 (EQPQ…GSSR), 1580–1598 (SESS…SEPA), 1605–1622 (NLFT…PNSS), and 1650–1680 (LPSN…STNC). Positions 1741 to 1751 (ASAPPSSSPGR) are enriched in low complexity. A DNA-binding region (a.T hook 3) is located at residues 1847–1859 (KRRPGRPRKCPLQ). The interval 1911 to 1991 (KKGLKRKGWL…PRPPKKKYQK (81 aa)) is disordered. The segment at 2069-2288 (PDVPLYKKIR…KCRGIIGGKS (220 aa)) is catalytic domain. Positions 2091 to 2142 (YEATTCNCKKPDDDTRKGCVDDCLNRMIFAECSPNTCPCGEQCCNQRIQRHE) constitute an AWS domain. In terms of domain architecture, SET spans 2145-2261 (QCLERFRAEE…AGTELTYDYN (117 aa)). A Post-SET domain is found at 2269–2285 (KQQLCKCGFEKCRGIIG). Positions 2288-2346 (SQRVNGLTSSKNSQPMATHKKSGRSKEKRKSKHKLKKRRGHLSEEPSENINTPTRLTPQ) are disordered. The span at 2289–2303 (QRVNGLTSSKNSQPM) shows a compositional bias: polar residues. The span at 2305–2327 (THKKSGRSKEKRKSKHKLKKRRG) shows a compositional bias: basic residues. Residues lysine 2317, lysine 2319, and lysine 2323 each carry the N6-acetyllysine modification. Over residues 2335–2346 (ENINTPTRLTPQ) the composition is skewed to polar residues. Residues 2444 to 2550 (RLAQIFKEIC…KAYYNARHEA (107 aa)) form the Bromo domain. Residues 2585 to 2631 (VIRCICGLYKDEGLMIQCDKCMVWQHCDCMGVNSDVEHYLCEQCDPR) form a PHD-type zinc finger. The BAH domain maps to 2661-2798 (LLLRQGDCVY…KSAHLFYKIH (138 aa)). 2 disordered regions span residues 2825–2856 (SPHY…DLGQ) and 2876–2919 (NEIP…RRHN). Residues 2842 to 2855 (WKSERSKPPLKDLG) are compositionally biased toward basic and acidic residues.

The protein belongs to the class V-like SAM-binding methyltransferase superfamily. Histone-lysine methyltransferase family. SET2 subfamily. Methylated at Gln-1220 by N6AMT1. In terms of tissue distribution, widely expressed, with highest level in brain, heart and kidney.

It is found in the nucleus. It localises to the cell junction. The protein resides in the tight junction. Its subcellular location is the chromosome. It catalyses the reaction L-lysyl(36)-[histone H3] + 3 S-adenosyl-L-methionine = N(6),N(6),N(6)-trimethyl-L-lysyl(36)-[histone H3] + 3 S-adenosyl-L-homocysteine + 3 H(+). It carries out the reaction L-lysyl(9)-[histone H3] + S-adenosyl-L-methionine = N(6)-methyl-L-lysyl(9)-[histone H3] + S-adenosyl-L-homocysteine + H(+). Histone methyltransferase specifically trimethylating 'Lys-36' of histone H3 forming H3K36me3. Also monomethylates 'Lys-9' of histone H3 (H3K9me1) in vitro. The physiological significance of the H3K9me1 activity is unclear. In Homo sapiens (Human), this protein is Histone-lysine N-methyltransferase ASH1L (ASH1L).